The following is an 813-amino-acid chain: Glycerol-3-phosphate acyltransferase (813 aa).

Residues 304–309 carry the HXXXXD motif motif; sequence CHRSHI.

Belongs to the GPAT/DAPAT family.

The protein resides in the cell inner membrane. The catalysed reaction is sn-glycerol 3-phosphate + an acyl-CoA = a 1-acyl-sn-glycero-3-phosphate + CoA. It functions in the pathway phospholipid metabolism; CDP-diacylglycerol biosynthesis; CDP-diacylglycerol from sn-glycerol 3-phosphate: step 1/3. This Actinobacillus succinogenes (strain ATCC 55618 / DSM 22257 / CCUG 43843 / 130Z) protein is Glycerol-3-phosphate acyltransferase.